The primary structure comprises 603 residues: UvrABC system protein C (603 aa).

One can recognise a GIY-YIG domain in the interval 14–92 (ELPGVYRMLD…IKSLAPRYNI (79 aa)). The UVR domain occupies 201–236 (QEVTRRLTKSMEEASAKLAFEQAAVFRDQIQSLHQV).

This sequence belongs to the UvrC family. As to quaternary structure, interacts with UvrB in an incision complex.

It localises to the cytoplasm. Its function is as follows. The UvrABC repair system catalyzes the recognition and processing of DNA lesions. UvrC both incises the 5' and 3' sides of the lesion. The N-terminal half is responsible for the 3' incision and the C-terminal half is responsible for the 5' incision. The sequence is that of UvrABC system protein C from Dechloromonas aromatica (strain RCB).